We begin with the raw amino-acid sequence, 93 residues long: uncharacterized protein (93 aa).

This is an uncharacterized protein from Saccharomyces cerevisiae (strain ATCC 204508 / S288c) (Baker's yeast).